The sequence spans 89 residues: UPF0213 protein LMOf2365_0181 (89 aa).

Positions 5–80 (SEHFFYVLKC…KKLSRKNKDA (76 aa)) constitute a GIY-YIG domain.

The protein belongs to the UPF0213 family.

The chain is UPF0213 protein LMOf2365_0181 from Listeria monocytogenes serotype 4b (strain F2365).